Consider the following 222-residue polypeptide: Cytidylate kinase (222 aa).

7 to 15 (GPSASGKST) contacts ATP.

Belongs to the cytidylate kinase family. Type 1 subfamily.

The protein resides in the cytoplasm. The catalysed reaction is CMP + ATP = CDP + ADP. The enzyme catalyses dCMP + ATP = dCDP + ADP. The protein is Cytidylate kinase of Aquifex aeolicus (strain VF5).